The sequence spans 91 residues: Small ribosomal subunit protein eS24 (91 aa).

The interval 51-91 (QRRKDAAAHKEAYNAMPEAERRHLNSEKYANRKAEVSYKHR) is disordered.

This sequence belongs to the eukaryotic ribosomal protein eS24 family.

This Caenorhabditis elegans protein is Small ribosomal subunit protein eS24.